Consider the following 659-residue polypeptide: Pseudouridylate synthase 7 homolog (659 aa).

M1 bears the N-acetylmethionine mark. Composition is skewed to polar residues over residues 1–10 (MEMTEMTSVS) and 39–54 (CPTT…SLPS). A disordered region spans residues 1 to 99 (MEMTEMTSVS…EEEEEEAESF (99 aa)). Residue S10 is modified to Phosphoserine. Acidic residues predominate over residues 75–98 (PSEEEEEEDGLSEEEEEEEEEAES). Position 125 is a phosphoserine (S125). Residue D292 is the Nucleophile of the active site. The region spanning 368-578 (GFINYYGMQR…SGAYRKIIIR (211 aa)) is the TRUD domain.

The protein belongs to the pseudouridine synthase TruD family. Interacts with SIRT1.

It is found in the nucleus. It catalyses the reaction a uridine in tRNA = a pseudouridine in tRNA. The enzyme catalyses uridine(13) in tRNA = pseudouridine(13) in tRNA. It carries out the reaction a uridine in mRNA = a pseudouridine in mRNA. Functionally, pseudouridylate synthase that catalyzes pseudouridylation of RNAs. Acts as a regulator of protein synthesis in embryonic stem cells by mediating pseudouridylation of RNA fragments derived from tRNAs (tRFs): pseudouridylated tRFs inhibit translation by targeting the translation initiation complex. Also catalyzes pseudouridylation of mRNAs: mediates pseudouridylation of mRNAs with the consensus sequence 5'-UGUAG-3'. Acts as a regulator of pre-mRNA splicing by mediating pseudouridylation of pre-mRNAs at locations associated with alternatively spliced regions. Pseudouridylation of pre-mRNAs near splice sites directly regulates mRNA splicing and mRNA 3'-end processing. In addition to mRNAs and tRNAs, binds other types of RNAs, such as snRNAs, Y RNAs and vault RNAs, suggesting that it can catalyze pseudouridylation of many RNA types. The sequence is that of Pseudouridylate synthase 7 homolog from Bos taurus (Bovine).